The chain runs to 337 residues: MAPIKVGINGFGRIGRIVFRNAVEHPDVEIVAVNDPFIETKYAAYMLKYDSTHGIFNGEIAQDGNDLVINGKKVKFYTERDPAVIPWKETGADYVVESTGVFTTIDKAKAHLQGGAKKVIISAPSADAPMYVMGVNEKSYDGSAVISQASCTTNCLAPLAKVINDKYTIIEGLMTTVHSYTATQKTVDGPSAKDWRGGRTAAQNIIPSSTGAPKAVGKVIPELNGKLTGMSMRVPTANVSVVDLTVRIEKGATYDEIKQAIKEAAEGPLKGVLAYTEDDFVSTDMIGNPNSSIFDAKAGISLNNNFVKLVSWYDNEWGYSRRVLDLLAHVAKVDASK.

Residues 13-14 (RI), Asp-35, and Arg-80 contribute to the NAD(+) site. D-glyceraldehyde 3-phosphate-binding positions include 150-152 (SCT), Thr-181, 210-211 (TG), and Arg-233. Catalysis depends on Cys-151, which acts as the Nucleophile. Asn-315 lines the NAD(+) pocket.

It belongs to the glyceraldehyde-3-phosphate dehydrogenase family. In terms of assembly, homotetramer.

It localises to the cytoplasm. The catalysed reaction is D-glyceraldehyde 3-phosphate + phosphate + NAD(+) = (2R)-3-phospho-glyceroyl phosphate + NADH + H(+). The protein operates within carbohydrate degradation; glycolysis; pyruvate from D-glyceraldehyde 3-phosphate: step 1/5. The polypeptide is Glyceraldehyde-3-phosphate dehydrogenase (GPDA) (Colletotrichum lindemuthianum (Bean anthracnose fungus)).